The sequence spans 265 residues: R-spondin-1 (265 aa).

A signal peptide spans 1 to 20 (MRLGLCVVALVLSWTHIAVG). 2 FU repeats span residues 34–85 (AEGS…GYFD) and 91–135 (MNKC…GSTA). 11 cysteine pairs are disulfide-bonded: C40-C47, C44-C53, C56-C75, C79-C94, C97-C105, C102-C111, C114-C125, C129-C142, C148-C190, C159-C166, and C199-C206. Residue N137 is glycosylated (N-linked (GlcNAc...) asparagine). One can recognise a TSP type-1 domain in the interval 147 to 207 (QCEMSEWSPW…KCTVRRTPCP (61 aa)). W153 carries a C-linked (Man) tryptophan glycan. Residue W156 is glycosylated (C-linked (Man) tryptophan; by DPY19L3). 2 disordered regions span residues 173–192 (EERT…TCSD) and 201–265 (VRRT…TWAQ). The segment covering 245 to 257 (QQQPQPGTTGPLT) has biased composition (low complexity).

Belongs to the R-spondin family. As to quaternary structure, interacts with ZNRF3; promoting indirect interaction between ZNRF3 and LGR4 and membrane clearance of ZNRF3. Identified in a complex composed of RNF43, LGR5 and RSPO1. Interacts with the extracellular domain of FZD8 and LRP6. It however does not form a ternary complex with FZD8 and LRP6. Interacts with WNT1. Binds heparin. Interacts with LGR4, LGR5 and LGR6. Interacts (via FU repeats) with KREM1. Post-translationally, C-, and N-glycosylated. N-glycosylation at Asn-137, negatively influences its secretion and enhancing effect on Wnt/beta-catenin signaling. C-mannosylation at Trp-156 by DPY19L3 is required for its secretion an regulates the enhancing activity of Wnt signaling. Expressed in the dorsal part of the neural tube on 10 and 12 dpc, especially in the boundary region between roof plate and neuroepithelium. This expression is enhanced in the rostral part. Also expressed in other tissues such as truncal region neighboring forelimbs and mesenchymal tissues around the nasal cavity.

It localises to the secreted. It is found in the nucleus. Functionally, activator of the canonical Wnt signaling pathway by acting as a ligand for LGR4-6 receptors. Upon binding to LGR4-6 (LGR4, LGR5 or LGR6), LGR4-6 associate with phosphorylated LRP6 and frizzled receptors that are activated by extracellular Wnt receptors, triggering the canonical Wnt signaling pathway to increase expression of target genes. Also regulates the canonical Wnt/beta-catenin-dependent pathway and non-canonical Wnt signaling by acting as an inhibitor of ZNRF3, an important regulator of the Wnt signaling pathway. Acts as a ligand for frizzled FZD8 and LRP6. May negatively regulate the TGF-beta pathway. Has a essential roles in ovary determination. Regulates Wnt signaling by antagonizing DKK1/KREM1-mediated internalization of LRP6 through an interaction with KREM1. This chain is R-spondin-1 (Rspo1), found in Mus musculus (Mouse).